Consider the following 48-residue polypeptide: Large ribosomal subunit protein uL14 (48 aa).

Belongs to the universal ribosomal protein uL14 family.

This Onchocerca volvulus protein is Large ribosomal subunit protein uL14 (RPL23).